A 491-amino-acid chain; its full sequence is Peptidyl-prolyl isomerase CWC27 (491 aa).

Positions Thr-11–Ile-167 constitute a PPIase cyclophilin-type domain. Composition is skewed to basic and acidic residues over residues Ala-186 to Glu-202, Asp-268 to Ala-298, and Ala-306 to Arg-316. 2 disordered regions span residues Ala-186–Asp-427 and Arg-464–Arg-491. A coiled-coil region spans residues Ala-277 to Asp-327. A compositionally biased stretch (low complexity) spans Gly-323–Ser-333. Positions Ala-352–Gly-367 are enriched in basic residues. Acidic residues-rich tracts occupy residues Asp-391 to Ala-406 and Ala-418 to Asp-427. The segment covering Arg-482–Arg-491 has biased composition (basic residues).

This sequence belongs to the cyclophilin-type PPIase family. CWC27 subfamily. Associated with the spliceosome.

Its subcellular location is the cytoplasm. The protein resides in the nucleus. It catalyses the reaction [protein]-peptidylproline (omega=180) = [protein]-peptidylproline (omega=0). Its function is as follows. PPIases accelerate the folding of proteins. It catalyzes the cis-trans isomerization of proline imidic peptide bonds in oligopeptides. Involved in pre-mRNA splicing. This is Peptidyl-prolyl isomerase CWC27 (CWC27) from Cryptococcus neoformans var. neoformans serotype D (strain B-3501A) (Filobasidiella neoformans).